The chain runs to 411 residues: UPF0761 membrane protein PA14_51960 (411 aa).

6 consecutive transmembrane segments (helical) span residues 36–56 (LFAV…IPAF), 92–112 (HLTW…LVTI), 132–152 (FLLY…GFAV), 174–194 (LLGL…YSAV), 207–229 (GGVF…VSLF), and 244–264 (IFLL…VLVC).

This sequence belongs to the UPF0761 family.

Its subcellular location is the cell inner membrane. The polypeptide is UPF0761 membrane protein PA14_51960 (Pseudomonas aeruginosa (strain UCBPP-PA14)).